The sequence spans 230 residues: Nicotinamide riboside kinase 2 (230 aa).

9–17 (GMTNGGKTT) lines the ATP pocket. Mg(2+) contacts are provided by T16 and D35. D35 (proton acceptor) is an active-site residue. Residues 35-38 (DDFF) and 54-55 (WD) each bind substrate. Residue R130 coordinates ATP. Substrate contacts are provided by residues R131 and 136–137 (YT). ATP contacts are provided by residues 134–136 (RNY) and 174–176 (KSR). The disordered stretch occupies residues 191-230 (LLNRSQESAPSPARPARTQGPGRGCGHRTARPAASQQDSM).

The protein belongs to the uridine kinase family. NRK subfamily. As to quaternary structure, monomer. Interacts with ITGB1 alone or when associated with alpha-7, but not with alpha-5. In terms of tissue distribution, predominantly expressed in skeletal muscle and, at a much lower level, in the heart (at protein level). No expression in brain, kidney, liver, lung, pancreas nor placenta.

The catalysed reaction is beta-nicotinamide D-riboside + ATP = beta-nicotinamide D-ribonucleotide + ADP + H(+). The enzyme catalyses beta-D-ribosylnicotinate + ATP = nicotinate beta-D-ribonucleotide + ADP + H(+). It functions in the pathway cofactor biosynthesis; NAD(+) biosynthesis. Its function is as follows. Catalyzes the phosphorylation of nicotinamide riboside (NR) and nicotinic acid riboside (NaR) to form nicotinamide mononucleotide (NMN) and nicotinic acid mononucleotide (NaMN). Reduces laminin matrix deposition and cell adhesion to laminin, but not to fibronectin. Involved in the regulation of PXN at the protein level and of PXN tyrosine phosphorylation. May play a role in the regulation of terminal myogenesis. The sequence is that of Nicotinamide riboside kinase 2 (NMRK2) from Homo sapiens (Human).